The primary structure comprises 1109 residues: Protein translocase subunit SecA (1109 aa).

ATP-binding positions include Gln-175, 193-197 (GEGKT), and Asp-695. The disordered stretch occupies residues 1038 to 1109 (VRQAAPEQRQ…KYKNCHGRNS (72 aa)). Basic and acidic residues-rich tracts occupy residues 1045 to 1059 (QRQD…KQDL) and 1071 to 1088 (DTRE…KTVG). Zn(2+)-binding residues include Cys-1093, Cys-1095, Cys-1104, and His-1105. Residues 1099 to 1109 (KKYKNCHGRNS) are compositionally biased toward basic residues.

The protein belongs to the SecA family. Monomer and homodimer. Part of the essential Sec protein translocation apparatus which comprises SecA, SecYEG and auxiliary proteins SecDF. Other proteins may also be involved. Zn(2+) serves as cofactor.

The protein localises to the cell inner membrane. It localises to the cytoplasm. The enzyme catalyses ATP + H2O + cellular proteinSide 1 = ADP + phosphate + cellular proteinSide 2.. Functionally, part of the Sec protein translocase complex. Interacts with the SecYEG preprotein conducting channel. Has a central role in coupling the hydrolysis of ATP to the transfer of proteins into and across the cell membrane, serving as an ATP-driven molecular motor driving the stepwise translocation of polypeptide chains across the membrane. This chain is Protein translocase subunit SecA, found in Bacteroides fragilis (strain ATCC 25285 / DSM 2151 / CCUG 4856 / JCM 11019 / LMG 10263 / NCTC 9343 / Onslow / VPI 2553 / EN-2).